Here is a 182-residue protein sequence, read N- to C-terminus: LPS-assembly lipoprotein LptE (182 aa).

The first 19 residues, 1–19 (MRHRILTLLLGLAVLVTAG), serve as a signal peptide directing secretion. C20 is lipidated: N-palmitoyl cysteine. C20 carries S-diacylglycerol cysteine lipidation.

Belongs to the LptE lipoprotein family. Component of the lipopolysaccharide transport and assembly complex. Interacts with LptD.

The protein localises to the cell outer membrane. Together with LptD, is involved in the assembly of lipopolysaccharide (LPS) at the surface of the outer membrane. Required for the proper assembly of LptD. Binds LPS and may serve as the LPS recognition site at the outer membrane. The protein is LPS-assembly lipoprotein LptE of Photorhabdus laumondii subsp. laumondii (strain DSM 15139 / CIP 105565 / TT01) (Photorhabdus luminescens subsp. laumondii).